The following is a 685-amino-acid chain: DNA ligase (685 aa).

Residues 34 to 38 (DAVFD), 83 to 84 (SL), and Glu113 contribute to the NAD(+) site. Lys115 functions as the N6-AMP-lysine intermediate in the catalytic mechanism. NAD(+) contacts are provided by Arg136, Glu173, Lys297, and Lys321. Zn(2+) is bound by residues Cys415, Cys418, Cys433, and Cys438. The BRCT domain maps to 607–685 (QEKLQFSGKT…EQELMTLISN (79 aa)).

This sequence belongs to the NAD-dependent DNA ligase family. LigA subfamily. Mg(2+) serves as cofactor. Mn(2+) is required as a cofactor.

It catalyses the reaction NAD(+) + (deoxyribonucleotide)n-3'-hydroxyl + 5'-phospho-(deoxyribonucleotide)m = (deoxyribonucleotide)n+m + AMP + beta-nicotinamide D-nucleotide.. Its function is as follows. DNA ligase that catalyzes the formation of phosphodiester linkages between 5'-phosphoryl and 3'-hydroxyl groups in double-stranded DNA using NAD as a coenzyme and as the energy source for the reaction. It is essential for DNA replication and repair of damaged DNA. The chain is DNA ligase from Prochlorococcus marinus (strain SARG / CCMP1375 / SS120).